We begin with the raw amino-acid sequence, 510 residues long: Leucine-rich repeat protein lrrA (510 aa).

LRR repeat units follow at residues 14–34, 35–59, 60–82, 84–106, 107–130, 132–152, 153–176, 177–200, 202–222, 224–245, 246–270, 272–292, 293–315, 316–340, 341–363, 365–386, 387–408, 410–432, 433–458, and 460–478; these read YRKREIVDLRKMNIDKLPPTI, GALQCKELLLSENDLITIPEEIGKL, SKVEIIDFAKNRINYIPPEIGSL, TLKQLFLSNNKLFYTPITPNIGA, LKNLTRLDLSSNQLDDLPVEISNC, ALEYLDISDNQLQSFPLEFGK, LYNLQVFNCSKNSLKSLPSEISGW, VKLEELNVSNNQLAFLPNQICLLG, LSTLNVGFNKLQQLPEELSSM, SLTNLDLKVNPPLQYVPQLSNL, RQLKILSIRNLQITHLPLGLGLLSE, IELDIRDNPQLKEIPYDIATL, INLQKLDLFGNNMRIVPREVGNL, INLQTLDLRQNKLTIDNIPSEIGKL, VNLKKLLLSNNLLIALPPEIASM, ALKEFEASNNQLQAIPTEIGEL, SGLTKINLSGNKLTSIPASFGN, SELQICDLKSNEIAELPTTLDGL, KSCTKIDLSHNMLTELPWEFGDLIGL, and ILDVGHNPLTIPPNPIVMK.

The protein localises to the cytoplasm. Its function is as follows. Involved in cytoskeleton remodeling, which is needed for normal chemotactic aggregation and efficient cell sorting during multicellular morphogenesis. The protein is Leucine-rich repeat protein lrrA (lrrA) of Dictyostelium discoideum (Social amoeba).